Consider the following 187-residue polypeptide: Apolipophorin-3 (187 aa).

Positions 1-17 (MAAKFIILLALFALSQA) are cleaved as a signal peptide. A propeptide spanning residues 18 to 22 (SVVRR) is cleaved from the precursor.

This sequence belongs to the insect apolipophorin-3 family. As to quaternary structure, equilibrium between a soluble monomer and a bound lipoprotein form. Apolipophorin-3 associates with lipophorin during lipid loading until each particle contains 9 or 14 molecules of apolipophorin-3. Hemolymph.

It is found in the secreted. Assists in the loading of diacylglycerol, generated from triacylglycerol stores in the fat body through the action of adipokinetic hormone, into lipophorin, the hemolymph lipoprotein. It increases the lipid carrying capacity of lipophorin by covering the expanding hydrophobic surface resulting from diacylglycerol uptake. It thus plays a critical role in the transport of lipids during flight in several species of insects. This Hyphantria cunea (Fall webworm moth) protein is Apolipophorin-3.